The sequence spans 835 residues: Microcephalin (835 aa).

The region spanning 1–93 (MAAPILKDVV…AHIDESLFPA (93 aa)) is the BRCT 1 domain. Phosphoserine occurs at positions 279, 287, 296, and 333. Disordered regions lie at residues 332 to 376 (LSPT…RKRS) and 417 to 442 (SPDN…PAQF). Thr335 carries the phosphothreonine modification. Over residues 343-361 (LLIHSRPRSSSVKRKRVSH) the composition is skewed to basic residues. Ser548 carries the phosphoserine modification. The tract at residues 555–583 (AVDLKSTQNKGTTSKISNSSEGEAQSEHE) is disordered. The segment covering 559–577 (KSTQNKGTTSKISNSSEGE) has biased composition (polar residues). 2 BRCT domains span residues 640–730 (SGRG…PFEL) and 751–833 (YRGT…NYLL).

In terms of assembly, interacts with CDC27 and maybe other components of the APC/C complex. Interacts with histone variant H2AX under DNA damage conditions.

It localises to the cytoplasm. The protein localises to the cytoskeleton. Its subcellular location is the microtubule organizing center. It is found in the centrosome. In terms of biological role, implicated in chromosome condensation and DNA damage induced cellular responses. May play a role in neurogenesis and regulation of the size of the cerebral cortex. The sequence is that of Microcephalin from Pan troglodytes (Chimpanzee).